A 632-amino-acid chain; its full sequence is Mitoguardin 1 (632 aa).

A helical membrane pass occupies residues 70–90; that stretch reads PVAKKLFVVTAVSAISVIFLA. Residues Ser289 and Ser293 each carry the phosphoserine modification.

Belongs to the mitoguardin family. Homodimer and heterodimer; forms heterodimers with MIGA2. Interacts with PLD6/MitoPLD.

The protein localises to the mitochondrion outer membrane. Functionally, regulator of mitochondrial fusion: acts by forming homo- and heterodimers at the mitochondrial outer membrane and facilitating the formation of PLD6/MitoPLD dimers. May act by regulating phospholipid metabolism via PLD6/MitoPLD. In Homo sapiens (Human), this protein is Mitoguardin 1.